Here is a 215-residue protein sequence, read N- to C-terminus: Oligoribonuclease (215 aa).

The Exonuclease domain occupies 5-170; the sequence is LVWIDCEMTG…ADIHESIREL (166 aa). Tyr-127 is an active-site residue. Residues 196–215 are disordered; the sequence is LGPPGKDAADTDSAAGHTTG.

The protein belongs to the oligoribonuclease family.

It is found in the cytoplasm. Functionally, 3'-to-5' exoribonuclease specific for small oligoribonucleotides. The chain is Oligoribonuclease from Mycobacterium sp. (strain JLS).